Reading from the N-terminus, the 218-residue chain is Glutathione S-transferase U24 (218 aa).

One can recognise a GST N-terminal domain in the interval 3–82 (DEVILLDFWA…YIDETWPDNN (80 aa)). Glutathione-binding positions include 13–14 (SM), 39–40 (NK), 53–54 (KI), and 66–67 (ES). The GST C-terminal domain occupies 88-215 (DPYKRAHAKF…TFISERRKKL (128 aa)). Threonine 148 is subject to Phosphothreonine.

It belongs to the GST superfamily. Tau family.

The protein localises to the cytoplasm. Its subcellular location is the cytosol. It catalyses the reaction RX + glutathione = an S-substituted glutathione + a halide anion + H(+). Its function is as follows. May be involved in the conjugation of reduced glutathione to a wide number of exogenous and endogenous hydrophobic electrophiles and have a detoxification role against certain herbicides. This Arabidopsis thaliana (Mouse-ear cress) protein is Glutathione S-transferase U24 (GSTU24).